The chain runs to 396 residues: Elongation factor Tu (396 aa).

Residues 10–205 (KPHVNIGTIG…ACDDSIPDPE (196 aa)) enclose the tr-type G domain. Positions 19–26 (GHVDHGKT) are G1. 19–26 (GHVDHGKT) is a binding site for GTP. Thr-26 lines the Mg(2+) pocket. Residues 62–66 (GITIN) form a G2 region. A G3 region spans residues 83 to 86 (DAPG). Residues 83–87 (DAPGH) and 138–141 (NKCD) contribute to the GTP site. The segment at 138-141 (NKCD) is G4. Residues 175 to 177 (SAL) form a G5 region.

It belongs to the TRAFAC class translation factor GTPase superfamily. Classic translation factor GTPase family. EF-Tu/EF-1A subfamily. As to quaternary structure, monomer.

Its subcellular location is the cytoplasm. The enzyme catalyses GTP + H2O = GDP + phosphate + H(+). In terms of biological role, GTP hydrolase that promotes the GTP-dependent binding of aminoacyl-tRNA to the A-site of ribosomes during protein biosynthesis. The chain is Elongation factor Tu from Corynebacterium diphtheriae (strain ATCC 700971 / NCTC 13129 / Biotype gravis).